The sequence spans 448 residues: StAR-related lipid transfer protein 3 (448 aa).

Residues 47-219 (FSDVRRTFCL…YSPPESLAGS (173 aa)) enclose the MENTAL domain. Helical transmembrane passes span 53–73 (TFCLFVTFDLLFITLLWIIEL), 96–116 (FFDIFLLAVFRFLCLQLGYAA), 122–142 (WWVIAITTLVTTAFLIAKVIL), and 150–170 (AFGYVLPITSFVVAWLETWFL). An FFAT motif is present at residues 208–214 (QFYSPPE). An START domain is found at 232–445 (AVTEQEKAFV…LRQRINEVHV (214 aa)).

Belongs to the STARD3 family. As to quaternary structure, homodimer. Post-translationally, phosphorylated. Phosphorylation allows the tethering of two membranes that participates in the formation of ER-endosome contacts. Phosphorylation of FFAT motif drives membrane tethering between the endoplasmic reticulum and late endosomes that in turn allows the efficient transport of sterol mediated by the START domain.

It localises to the late endosome membrane. It catalyses the reaction cholesterol(in) = cholesterol(out). Its function is as follows. Sterol-binding protein that mediates cholesterol transport from the endoplasmic reticulum to endosomes. The sterol transport mechanism is triggered by phosphorylation of FFAT motif that leads to membrane tethering between the endoplasmic reticulum and late endosomes. Acts as a lipid transfer protein that redirects sterol to the endosome at the expense of the cell membrane and favors membrane formation inside endosomes. The protein is StAR-related lipid transfer protein 3 of Danio rerio (Zebrafish).